The sequence spans 150 residues: Large ribosomal subunit protein bL9 (150 aa).

The protein belongs to the bacterial ribosomal protein bL9 family.

Binds to the 23S rRNA. In Sodalis glossinidius (strain morsitans), this protein is Large ribosomal subunit protein bL9.